A 245-amino-acid chain; its full sequence is tRNA pseudouridine synthase A 2 (245 aa).

Catalysis depends on aspartate 53, which acts as the Nucleophile. Tyrosine 111 contacts substrate.

This sequence belongs to the tRNA pseudouridine synthase TruA family. In terms of assembly, homodimer.

It carries out the reaction uridine(38/39/40) in tRNA = pseudouridine(38/39/40) in tRNA. In terms of biological role, formation of pseudouridine at positions 38, 39 and 40 in the anticodon stem and loop of transfer RNAs. This is tRNA pseudouridine synthase A 2 from Bacillus cereus (strain ATCC 14579 / DSM 31 / CCUG 7414 / JCM 2152 / NBRC 15305 / NCIMB 9373 / NCTC 2599 / NRRL B-3711).